A 32-amino-acid chain; its full sequence is MSDIN-like toxin proprotein 3 (32 aa).

Residues 1–10 (MSDINATRLP) constitute a propeptide that is removed on maturation. The segment at residues 11-17 (SFFFPIP) is a cross-link (cyclopeptide (Ser-Pro)). A propeptide spanning residues 18–32 (CISDDIEMVLTRGER) is cleaved from the precursor.

It belongs to the MSDIN fungal toxin family. In terms of processing, processed by the macrocyclase-peptidase enzyme POPB to yield a toxic cyclic heptapeptide. POPB first removes 10 residues from the N-terminus. Conformational trapping of the remaining peptide forces the enzyme to release this intermediate rather than proceed to macrocyclization. The enzyme rebinds the remaining peptide in a different conformation and catalyzes macrocyclization of the N-terminal 8 residues.

Probable toxin that belongs to the MSDIN-like toxin family responsible for a large number of food poisoning cases and deaths. The polypeptide is MSDIN-like toxin proprotein 3 (Amanita phalloides (Death cap)).